We begin with the raw amino-acid sequence, 386 residues long: Na(+)/H(+) antiporter NhaA (386 aa).

11 consecutive transmembrane segments (helical) span residues 10 to 30, 58 to 78, 94 to 114, 124 to 144, 154 to 174, 176 to 196, 199 to 219, 253 to 273, 283 to 303, 327 to 347, and 361 to 381; these read MGSASGILLFFFALLAIIFAN, LLHWINDGFMAVFFVLVGLEV, IFPAVAAIGGMIVPALIYYLI, GWAIPMATDIAFALGIVALLG, FLLALAIIDDLGAIVVIAVFF, EELSIQALSVAIVAIAGLITL, MKVGHLCAYLIFGLILWAAVL, ILTPWCSFFVLPLFAFANAGV, IFSTLPLGIALGLIVGKPLGV, VFAIAILCGIGFTMSMFLAGL, and LSRLGILLGSSVSAILGYLLL.

This sequence belongs to the NhaA Na(+)/H(+) (TC 2.A.33) antiporter family.

The protein resides in the cell inner membrane. It catalyses the reaction Na(+)(in) + 2 H(+)(out) = Na(+)(out) + 2 H(+)(in). Functionally, na(+)/H(+) antiporter that extrudes sodium in exchange for external protons. The sequence is that of Na(+)/H(+) antiporter NhaA from Mannheimia succiniciproducens (strain KCTC 0769BP / MBEL55E).